A 174-amino-acid polypeptide reads, in one-letter code: Crossover junction endodeoxyribonuclease RuvC (174 aa).

Active-site residues include aspartate 8, glutamate 69, and aspartate 141. Residues aspartate 8, glutamate 69, and aspartate 141 each coordinate Mg(2+).

The protein belongs to the RuvC family. Homodimer which binds Holliday junction (HJ) DNA. The HJ becomes 2-fold symmetrical on binding to RuvC with unstacked arms; it has a different conformation from HJ DNA in complex with RuvA. In the full resolvosome a probable DNA-RuvA(4)-RuvB(12)-RuvC(2) complex forms which resolves the HJ. Mg(2+) is required as a cofactor.

It localises to the cytoplasm. The catalysed reaction is Endonucleolytic cleavage at a junction such as a reciprocal single-stranded crossover between two homologous DNA duplexes (Holliday junction).. In terms of biological role, the RuvA-RuvB-RuvC complex processes Holliday junction (HJ) DNA during genetic recombination and DNA repair. Endonuclease that resolves HJ intermediates. Cleaves cruciform DNA by making single-stranded nicks across the HJ at symmetrical positions within the homologous arms, yielding a 5'-phosphate and a 3'-hydroxyl group; requires a central core of homology in the junction. The consensus cleavage sequence is 5'-(A/T)TT(C/G)-3'. Cleavage occurs on the 3'-side of the TT dinucleotide at the point of strand exchange. HJ branch migration catalyzed by RuvA-RuvB allows RuvC to scan DNA until it finds its consensus sequence, where it cleaves and resolves the cruciform DNA. The sequence is that of Crossover junction endodeoxyribonuclease RuvC from Xanthomonas euvesicatoria pv. vesicatoria (strain 85-10) (Xanthomonas campestris pv. vesicatoria).